A 259-amino-acid polypeptide reads, in one-letter code: Leucine-rich repeat-containing protein 3B (259 aa).

Residues 1-33 (MNLVDLWLTRSLSMCLLLQSFVLMILCFHSASM) form the signal peptide. Residues 34–64 (CPKGCLCSSSGGLNVTCSNANLKEIPRDLPP) enclose the LRRNT domain. Residue asparagine 47 is glycosylated (N-linked (GlcNAc...) asparagine). LRR repeat units lie at residues 65 to 86 (ETVL…IFKD), 89 to 110 (QLRV…AFKG), and 114 to 135 (TLQT…AFNN). The N-linked (GlcNAc...) asparagine glycan is linked to asparagine 94. One can recognise an LRRCT domain in the interval 145–197 (NPWHCDCTLQQVLRSMASNHETAHNVICKTSVLDEHAGRPFLNAANDADLCNL). A helical transmembrane segment spans residues 205-225 (AMLVTMFGWFTMVISYVVYYV).

The protein belongs to the LRRC3 family.

It localises to the membrane. The chain is Leucine-rich repeat-containing protein 3B (LRRC3B) from Homo sapiens (Human).